Consider the following 591-residue polypeptide: Frizzled and smoothened-like protein F (591 aa).

An N-terminal signal peptide occupies residues 1–17; sequence MKILIIFIIFIISYISG. Residues 18 to 244 are Extracellular-facing; the sequence is FEIPKGFGIG…KWDQLLTMSK (227 aa). Residues 30–177 enclose the FZ domain; it reads IPDAECLNYI…GTFAVPCSDP (148 aa). 3 cysteine pairs are disulfide-bonded: cysteine 35–cysteine 105, cysteine 48–cysteine 98, and cysteine 123–cysteine 174. N-linked (GlcNAc...) asparagine glycosylation is found at asparagine 167, asparagine 187, asparagine 202, and asparagine 230. A helical transmembrane segment spans residues 245–265; it reads ILSTISFILSLYNVLTFGIIN. Residues 266 to 275 lie on the Cytoplasmic side of the membrane; it reads KKVSDPHKCT. A helical membrane pass occupies residues 276-296; it reads CFFSGSIALVNLCDIITYGIG. The Extracellular portion of the chain corresponds to 297–321; the sequence is YEELLCPEPGRSAKQQLDPVCGLTG. The helical transmembrane segment at 322-342 threads the bilayer; sequence AFFHLGITYCVLWSMTMGLVL. The Cytoplasmic segment spans residues 343-353; sequence YCSVKRQKWFK. Residues 354–374 form a helical membrane-spanning segment; it reads FNYFLIGNTTFTITTVVIAAA. Topologically, residues 375–397 are extracellular; the sequence is TSKFEAGLGSIECWIRDRWYAIS. The chain crosses the membrane as a helical span at residues 398 to 418; it reads LFWIPCGIALLIGSFCIIAVI. At 419-442 the chain is on the cytoplasmic side; that stretch reads HEVYKTSKKSISNRNDLLQRELKP. The chain crosses the membrane as a helical span at residues 443 to 463; the sequence is LLIVIFISGSFLYLFIFFFDI. Topologically, residues 464 to 495 are extracellular; the sequence is ERKFGGYRSAVEDYVLCLLNGSQEECFTTGPS. N-linked (GlcNAc...) asparagine glycosylation is present at asparagine 483. The helical transmembrane segment at 496-516 threads the bilayer; that stretch reads YVPYFLFYLVIRWFGIIFFLF. The Cytoplasmic segment spans residues 517–591; the sequence is YGTSNIARKI…AVELESIKIN (75 aa). Positions 538–571 are enriched in low complexity; that stretch reads SSISPKSTPKSSPKNSDSKINSNSTNNNNMILND. The segment at 538–573 is disordered; that stretch reads SSISPKSTPKSSPKNSDSKINSNSTNNNNMILNDNN.

The protein belongs to the G-protein coupled receptor Fz/Smo family.

It localises to the membrane. This Dictyostelium discoideum (Social amoeba) protein is Frizzled and smoothened-like protein F (fslF).